The primary structure comprises 75 residues: DNA-directed RNA polymerase subunit omega (75 aa).

Belongs to the RNA polymerase subunit omega family. The RNAP catalytic core consists of 2 alpha, 1 beta, 1 beta' and 1 omega subunit. When a sigma factor is associated with the core the holoenzyme is formed, which can initiate transcription.

It carries out the reaction RNA(n) + a ribonucleoside 5'-triphosphate = RNA(n+1) + diphosphate. In terms of biological role, promotes RNA polymerase assembly. Latches the N- and C-terminal regions of the beta' subunit thereby facilitating its interaction with the beta and alpha subunits. The polypeptide is DNA-directed RNA polymerase subunit omega (Lysinibacillus sphaericus (strain C3-41)).